Here is a 788-residue protein sequence, read N- to C-terminus: Multifunctional tryptophan biosynthesis protein (788 aa).

One can recognise a Glutamine amidotransferase type-1 domain in the interval 12–207 (DILMIDNFDS…MKLKGGTWEE (196 aa)). 63 to 65 (GPG) serves as a coordination point for L-glutamine. The active-site Nucleophile; for GATase activity is Cys91. 141–142 (SL) contacts L-glutamine. Residues His181 and Glu183 each act as for GATase activity in the active site. The segment at 238-503 (ILEKICAQRQ…DTRAFIRQLL (266 aa)) is indole-3-glycerol phosphate synthase. Positions 520 to 788 (LSRSCGIRTE…RAFVKAAKKL (269 aa)) are N-(5'-phosphoribosyl)anthranilate isomerase.

The catalysed reaction is N-(5-phospho-beta-D-ribosyl)anthranilate = 1-(2-carboxyphenylamino)-1-deoxy-D-ribulose 5-phosphate. The enzyme catalyses 1-(2-carboxyphenylamino)-1-deoxy-D-ribulose 5-phosphate + H(+) = (1S,2R)-1-C-(indol-3-yl)glycerol 3-phosphate + CO2 + H2O. It catalyses the reaction chorismate + L-glutamine = anthranilate + pyruvate + L-glutamate + H(+). It participates in amino-acid biosynthesis; L-tryptophan biosynthesis; L-tryptophan from chorismate: step 1/5. Its pathway is amino-acid biosynthesis; L-tryptophan biosynthesis; L-tryptophan from chorismate: step 3/5. The protein operates within amino-acid biosynthesis; L-tryptophan biosynthesis; L-tryptophan from chorismate: step 4/5. Trifunctional enzyme bearing the Gln amidotransferase (GATase) domain of anthranilate synthase, indole-glycerolphosphate synthase, and phosphoribosylanthranilate isomerase activities. The sequence is that of Multifunctional tryptophan biosynthesis protein (TRPC) from Phanerodontia chrysosporium (White-rot fungus).